The following is a 491-amino-acid chain: Glucose-6-phosphate 1-dehydrogenase (491 aa).

NADP(+) contacts are provided by residues Arg50, 92–93 (DV), and Lys147. His177, Lys181, Glu215, and Asp234 together coordinate substrate. His239 acts as the Proton acceptor in catalysis. Substrate is bound by residues Lys339 and Lys344.

It belongs to the glucose-6-phosphate dehydrogenase family.

It catalyses the reaction D-glucose 6-phosphate + NADP(+) = 6-phospho-D-glucono-1,5-lactone + NADPH + H(+). The protein operates within carbohydrate degradation; pentose phosphate pathway; D-ribulose 5-phosphate from D-glucose 6-phosphate (oxidative stage): step 1/3. Its function is as follows. Catalyzes the oxidation of glucose 6-phosphate to 6-phosphogluconolactone. In Dickeya dadantii (strain 3937) (Erwinia chrysanthemi (strain 3937)), this protein is Glucose-6-phosphate 1-dehydrogenase.